A 425-amino-acid chain; its full sequence is MKKVILAYSGGLDTSVILKWLSEKGFEVIAFVANLGQKEDFKAIECKALSTGASKVYVEDLRREFVTEFVFPALMGNALYEGRYLLGTALSRPLIAKKQVEIAEKENAAFVAHGATGKGNDQVRFELTYAALNPFLKVLSPWKDIEFLKLFKGRTDLLAYAKQKCILTRATIEKPYSEDENLMHISHEGGKLEDPLYIAGEDVFSWTNSPKNAPDEEVFLELHFRSGLPVKVVNLNDGSTKEDPLELFEYLNRIGSKYGVGRVDMVENRFIGIKSRGIYETPGATILWIAHRDLEGIAMDKEVMHLRDMLSVKFSELIYNGFWFSPEMDFLLSAFRKSQEGIEGKVNLIIYKGNVVPVSRFSPTSLYDQSLSSMDVDGGFDATDSKGFINIHALRLRAHNLVLRSRDPFGWRRGIIDAEIMGKGV.

ATP is bound by residues 7–15 and alanine 33; that span reads AYSGGLDTS. An L-citrulline-binding site is contributed by tyrosine 84. Glycine 114 provides a ligand contact to ATP. Threonine 116, asparagine 120, and aspartate 121 together coordinate L-aspartate. Position 120 (asparagine 120) interacts with L-citrulline. L-citrulline contacts are provided by arginine 124, serine 177, serine 186, glutamate 267, and tyrosine 279.

The protein belongs to the argininosuccinate synthase family. Type 1 subfamily. Homotetramer.

It is found in the cytoplasm. It catalyses the reaction L-citrulline + L-aspartate + ATP = 2-(N(omega)-L-arginino)succinate + AMP + diphosphate + H(+). It participates in amino-acid biosynthesis; L-arginine biosynthesis; L-arginine from L-ornithine and carbamoyl phosphate: step 2/3. This chain is Argininosuccinate synthase, found in Pseudothermotoga lettingae (strain ATCC BAA-301 / DSM 14385 / NBRC 107922 / TMO) (Thermotoga lettingae).